A 515-amino-acid polypeptide reads, in one-letter code: uncharacterized protein (515 aa).

3 disordered regions span residues 117 to 188 (DNIL…RKSQ), 362 to 453 (RSTS…AESM), and 496 to 515 (GNAVQEADTESMDDFMDYFN). Composition is skewed to basic and acidic residues over residues 370-380 (KNVESETKQEE), 388-402 (PAEDETPPMKEEVIE), and 428-438 (PIKEIEDKVEP). Acidic residues predominate over residues 502 to 515 (ADTESMDDFMDYFN).

This is an uncharacterized protein from Ostreid herpesvirus 1 (isolate France) (OsHV-1).